The chain runs to 489 residues: Glycogen synthase (489 aa).

Lys-15 contacts ADP-alpha-D-glucose.

It belongs to the glycosyltransferase 1 family. Bacterial/plant glycogen synthase subfamily.

The catalysed reaction is [(1-&gt;4)-alpha-D-glucosyl](n) + ADP-alpha-D-glucose = [(1-&gt;4)-alpha-D-glucosyl](n+1) + ADP + H(+). It functions in the pathway glycan biosynthesis; glycogen biosynthesis. In terms of biological role, synthesizes alpha-1,4-glucan chains using ADP-glucose. The protein is Glycogen synthase of Francisella tularensis subsp. tularensis (strain SCHU S4 / Schu 4).